A 306-amino-acid polypeptide reads, in one-letter code: Anamorsin homolog (306 aa).

A compositionally biased stretch (basic and acidic residues) spans 1-25 (MVPPREDVTVRIVCERRRTAGKEAR). Residues 1-51 (MVPPREDVTVRIVCERRRTAGKEARPPPSAKPTPGNTSSHPNAKETHRSNE) form a disordered region. Residues 59–190 (KQSHRRSIMA…RRNNTTNSVA (132 aa)) are N-terminal SAM-like domain. Residues 191-218 (TLNFASNNNNGNDLLIDEDNLLTDASNL) form a linker region. Residues Cys-236, Cys-242, Cys-245, and Cys-247 each coordinate [2Fe-2S] cluster. The interval 236-247 (CSGRAPCDDCTC) is fe-S binding site A. The segment covering 252-265 (GAKEGNSEQPKEIK) has biased composition (basic and acidic residues). The disordered stretch occupies residues 252-272 (GAKEGNSEQPKEIKSSSCGKC). [4Fe-4S] cluster-binding residues include Cys-269, Cys-272, Cys-280, and Cys-283. Short sequence motifs (cx2C motif) lie at residues 269-272 (CGKC) and 280-283 (CASC). The segment at 269–283 (CGKCSLGDAFRCASC) is fe-S binding site B.

This sequence belongs to the anamorsin family. As to quaternary structure, monomer. Requires [2Fe-2S] cluster as cofactor. [4Fe-4S] cluster serves as cofactor.

The protein localises to the cytoplasm. It localises to the mitochondrion intermembrane space. Component of the cytosolic iron-sulfur (Fe-S) protein assembly (CIA) machinery. Required for the maturation of extramitochondrial Fe-S proteins. Part of an electron transfer chain functioning in an early step of cytosolic Fe-S biogenesis, facilitating the de novo assembly of a [4Fe-4S] cluster on the cytosolic Fe-S scaffold complex. Electrons are transferred from NADPH via a FAD- and FMN-containing diflavin oxidoreductase. Together with the diflavin oxidoreductase, also required for the assembly of the diferric tyrosyl radical cofactor of ribonucleotide reductase (RNR), probably by providing electrons for reduction during radical cofactor maturation in the catalytic small subunit. This is Anamorsin homolog from Phaeodactylum tricornutum (strain CCAP 1055/1).